A 228-amino-acid chain; its full sequence is Probable C4-dicarboxylate response regulator DctR (228 aa).

The Response regulatory domain maps to 7–123 (TVLLIEDDPM…RMKQALEQYR (117 aa)). At aspartate 58 the chain carries 4-aspartylphosphate. A DNA-binding region (H-T-H motif) is located at residues 180–199 (AEEVADGVGIARVTARRYLE).

Phosphorylated by DctS.

The protein localises to the cytoplasm. Functionally, member of the two-component regulatory system DctS/DctR. Essential for expression of DctP. The polypeptide is Probable C4-dicarboxylate response regulator DctR (dctR) (Priestia megaterium (Bacillus megaterium)).